We begin with the raw amino-acid sequence, 151 residues long: Deoxyuridine 5'-triphosphate nucleotidohydrolase (151 aa).

Substrate contacts are provided by residues 70–72, N83, 87–89, and M97; these read RSG and LID.

The protein belongs to the dUTPase family. Requires Mg(2+) as cofactor.

The enzyme catalyses dUTP + H2O = dUMP + diphosphate + H(+). Its pathway is pyrimidine metabolism; dUMP biosynthesis; dUMP from dCTP (dUTP route): step 2/2. This enzyme is involved in nucleotide metabolism: it produces dUMP, the immediate precursor of thymidine nucleotides and it decreases the intracellular concentration of dUTP so that uracil cannot be incorporated into DNA. The protein is Deoxyuridine 5'-triphosphate nucleotidohydrolase of Yersinia pseudotuberculosis serotype O:1b (strain IP 31758).